An 82-amino-acid chain; its full sequence is Delta-actitoxin-Aeq2a (82 aa).

A signal peptide spans 1–19 (MNRLMILVFAAVFLALASA). The propeptide occupies 20–26 (DEDVDIA). Intrachain disulfides connect C32/C79, C34/C69, and C62/C80.

The protein belongs to the sea anemone sodium channel inhibitory toxin family. Type I subfamily.

The protein localises to the secreted. It is found in the nematocyst. Its function is as follows. Binds specifically to voltage-gated sodium channels (Nav), thereby delaying their inactivation during signal transduction. Causes death to crabs (minimum lethal dose of 25 ug/kg) and mice. This Actinia equina (Beadlet anemone) protein is Delta-actitoxin-Aeq2a.